The chain runs to 144 residues: MKVLVVNGPNLNMLGKRDKNIYGNFSHEDLVKMIEDWGRKNDVEVEVFQSNHEGEILDRLHRLDFDGLVINPGAFTHYSYAIRDALEIVKVPKVEVHISNIHRREEFRRRSVTAEVCDGQISGLGVYGYLLALEYIKKKLEELT.

Catalysis depends on Tyr-22, which acts as the Proton acceptor. The substrate site is built by Asn-71, His-77, and Asp-84. His-97 serves as the catalytic Proton donor. Residues 98–99 (IS) and Arg-108 contribute to the substrate site.

This sequence belongs to the type-II 3-dehydroquinase family. In terms of assembly, homododecamer.

It carries out the reaction 3-dehydroquinate = 3-dehydroshikimate + H2O. Its pathway is metabolic intermediate biosynthesis; chorismate biosynthesis; chorismate from D-erythrose 4-phosphate and phosphoenolpyruvate: step 3/7. Catalyzes a trans-dehydration via an enolate intermediate. This Thermotoga petrophila (strain ATCC BAA-488 / DSM 13995 / JCM 10881 / RKU-1) protein is 3-dehydroquinate dehydratase.